Here is a 344-residue protein sequence, read N- to C-terminus: Meiotic recombination protein DMC1 homolog (344 aa).

Residues 1-22 (MMASLKAEETSQMQLVEREEND) form a disordered region. 133 to 140 (GEFRSGKT) contacts ATP. DsDNA is bound at residue arginine 235. SsDNA is bound by residues arginine 235, phenylalanine 238, arginine 241, arginine 247, and arginine 315. 2 residues coordinate dsDNA: arginine 241 and arginine 247.

The protein belongs to the RecA family. DMC1 subfamily. As to quaternary structure, double stacked ring-shaped homooctamer. Interacts with BRCA2A and BRCA2B. In terms of tissue distribution, expressed in mitotic and/or meiotic tissues. Expressed in roots, leaves and anthers and carpels of young fower buds.

It is found in the nucleus. May participate in meiotic recombination, specifically in homologous strand assimilation, which is required for the resolution of meiotic double-strand breaks. Mediates interhomolog recombination during meiosis. This chain is Meiotic recombination protein DMC1 homolog, found in Arabidopsis thaliana (Mouse-ear cress).